Reading from the N-terminus, the 1050-residue chain is MSEEISPNDRKFITNLLTQKNQESLLLSIGDKISKKKNKKPSKRIILITKNRIFFLKPSQNKVKKDIHLLDIQEIKSSTSNEFTIVAKVDNKQFSYGLITNKTDEIINQIRVTFNHQFFGCPEESTFKCTDIKDSRLVEIEQKDLPCGGFVETYQSICDHLGVPPRDDICWDMTNIISSKNIRSFNIGEIELPTSAGDTIRCLLGALKYNNYFKSFNFNNYTFNKEQFGYLAEVLKCNSTVEDLSLNNVGLKHDTMPIIATALSSNKNLALTAIDISNNQIEDKGMTAFSSYVASSLRGIASLDVSNTNCNKAGISVLTNALKKNIKMSSTLSYLNLSGNKMEADGSAGLSSFLASPNTLKTLNISNTTPSMETIVGALVIGCAELKTIDISDNKLTKKEVPHLVRFIGASSTLKHFNLSGTKVPVENLKELVVAITSNIYLQDVVLDLKNNDLGIAGARMLASLATDKLSNVIYLDVSENDFGDEGVSVICDGFVGNSTIKKLILNGNFKQSKTKSRPSAIESVISLLESECPLETLHMTVGNSKSPLKADILSLIYSLATNSSLLELDISGHQMGPKGAIGLGKALQTNKTLHTLIWDDNLTTAIGFAGFQVGLERNLTLKNMPTPLNDIIQCHREPKFQQIWKEIDSCINRNQSPTRAFEGNGGNSIGATNLSFLASGQQQGVEKLLNKIKSIGRKVTDPNNILIVKDAESTEKVIGGIHLIKESIHASLEMELNQKLKDFVQVVNDVINAKKNEMTQQILESMQNTFQSMDGPTIKRLATTIQYGSKDVDEQQIHSTLVKGAGAELSSRAHECFISALDIASDYTYEKITIGLDSVFKDLILEESQAQNEASGATPIPDSPVPTRSPQPTSPPITPQPTPTTNVPPVTAPRTGAAAPLKPANPPPVSTTTTPPVSTTPKPTQPVSKFGAKLSANSAVAEAIARNMGGGAPPIRKPVAPEPEPEPVTPTKDVTPLKSKPVVAPRSTPTTSTPTKTPVKKPSGPSVPGSLSDAPESDSAELTHVTASRPHIASKRKPPTRRPRPPTEN.

The segment at 1–179 (MSEEISPNDR…CWDMTNIISS (179 aa)) is required for interaction with capping protein. 8 LRR repeats span residues 243–266 (DLSLNNVGLKHDTMPIIATALSSN), 268–291 (NLALTAIDISNNQIEDKGMTAFSS), 329–352 (SSTLSYLNLSGNKMEADGSAGLSS), 383–409 (CAELKTIDISDNKLTKKEVPHLVRFIG), 411–436 (SSTLKHFNLSGTKVPVENLKELVVAI), 442–464 (LQDVVLDLKNNDLGIAGARMLAS), 470–493 (LSNVIYLDVSENDFGDEGVSVICD), and 563–590 (NSSLLELDISGHQMGPKGAIGLGKALQT). Disordered stretches follow at residues 851–931 (AQNE…VSKF) and 945–1050 (IARN…PTEN). The segment covering 862-883 (PDSPVPTRSPQPTSPPITPQPT) has biased composition (pro residues). Low complexity-rich tracts occupy residues 884–903 (PTTNVPPVTAPRTGAAAPLK) and 911–929 (STTTTPPVSTTPKPTQPVS). Short sequence motifs (PXXP motif; important for binding to SH3 domain-containing proteins) lie at residues 959-963 (PVAPE) and 968-971 (PVTP). The span at 988-1011 (STPTTSTPTKTPVKKPSGPSVPGS) shows a compositional bias: low complexity. Residues 1033–1050 (IASKRKPPTRRPRPPTEN) are compositionally biased toward basic residues.

It belongs to the CARMIL family. As to quaternary structure, interacts (via PXXP domains) with myoB and myoC (via SH3 domain). Interacts (via N-terminus) with the capping proteins acpA and acpB. Interacts (via the region between the LRR domain and COOH-terminal proline-rich domain) with the seven member Arp2/3 complex (arpB/Arp2, arpC/Arp3, arcA/p41-arc, arcB/p34-arc, arcC/p21-arc, arcD/p20-arc and arcE/p16-arc).

Its subcellular location is the cell projection. The protein localises to the pseudopodium. Functionally, serves as the scaffold for the assembly of a complex that links key players in the nucleation and termination of actin filament assembly with a ubiquitous barbed end-directed motor. This complex is composed of at least capping proteins (acpA and acpB), the Arp2/3 complex, type I myosins (myoB and myoC) and carmil. It has at least a modest ability to activate Arp2/3-dependent actin nucleation. CARMIL localizes along with the Arp2/3 complex, myoB, and myoC in the leading edge of cells and it plays a significant role in the structure and function of these actin-rich cellular extensions. The polypeptide is Protein CARMIL (carmil) (Dictyostelium discoideum (Social amoeba)).